Consider the following 311-residue polypeptide: 4-hydroxy-tetrahydrodipicolinate synthase (311 aa).

Thr51 contacts pyruvate. Residue Tyr140 is the Proton donor/acceptor of the active site. Lys168 (schiff-base intermediate with substrate) is an active-site residue. Position 209 (Ile209) interacts with pyruvate.

This sequence belongs to the DapA family. Homotetramer; dimer of dimers.

The protein localises to the cytoplasm. The enzyme catalyses L-aspartate 4-semialdehyde + pyruvate = (2S,4S)-4-hydroxy-2,3,4,5-tetrahydrodipicolinate + H2O + H(+). It functions in the pathway amino-acid biosynthesis; L-lysine biosynthesis via DAP pathway; (S)-tetrahydrodipicolinate from L-aspartate: step 3/4. Functionally, catalyzes the condensation of (S)-aspartate-beta-semialdehyde [(S)-ASA] and pyruvate to 4-hydroxy-tetrahydrodipicolinate (HTPA). In Streptococcus pneumoniae (strain 70585), this protein is 4-hydroxy-tetrahydrodipicolinate synthase.